Consider the following 269-residue polypeptide: Glutamate 5-kinase (269 aa).

Residue K14 participates in ATP binding. Residues S54, D141, and N157 each coordinate substrate. Residues 177 to 178 (SD) and 219 to 225 (TGGMVTK) each bind ATP.

Belongs to the glutamate 5-kinase family.

The protein resides in the cytoplasm. The catalysed reaction is L-glutamate + ATP = L-glutamyl 5-phosphate + ADP. Its pathway is amino-acid biosynthesis; L-proline biosynthesis; L-glutamate 5-semialdehyde from L-glutamate: step 1/2. Functionally, catalyzes the transfer of a phosphate group to glutamate to form L-glutamate 5-phosphate. The sequence is that of Glutamate 5-kinase from Clostridium perfringens (strain 13 / Type A).